Consider the following 42-residue polypeptide: Cytochrome b559 subunit beta (42 aa).

The helical transmembrane segment at 17–33 threads the bilayer; that stretch reads WLTIHALAVPTVFFLGA. His-21 serves as a coordination point for heme.

This sequence belongs to the PsbE/PsbF family. Heterodimer of an alpha subunit and a beta subunit. PSII is composed of 1 copy each of membrane proteins PsbA, PsbB, PsbC, PsbD, PsbE, PsbF, PsbH, PsbI, PsbJ, PsbK, PsbL, PsbM, PsbT, PsbX, PsbY, PsbZ, Psb30/Ycf12, at least 3 peripheral proteins of the oxygen-evolving complex and a large number of cofactors. It forms dimeric complexes. Heme b is required as a cofactor.

The protein localises to the plastid. The protein resides in the chloroplast thylakoid membrane. In terms of biological role, this b-type cytochrome is tightly associated with the reaction center of photosystem II (PSII). PSII is a light-driven water:plastoquinone oxidoreductase that uses light energy to abstract electrons from H(2)O, generating O(2) and a proton gradient subsequently used for ATP formation. It consists of a core antenna complex that captures photons, and an electron transfer chain that converts photonic excitation into a charge separation. This chain is Cytochrome b559 subunit beta, found in Emiliania huxleyi (Coccolithophore).